The following is a 130-amino-acid chain: Albumin-1 B (130 aa).

The first 26 residues, 1–26 (MASVKLASLMVLFATLGMFLTKNVGA), serve as a signal peptide directing secretion. Cystine bridges form between Cys29–Cys46, Cys33–Cys48, and Cys41–Cys58. 2 consecutive propeptides follow at residues 64–69 (VFLRTN) and 123–130 (LLKSVSTA).

The C-terminal glycine may be removed from PA1b. In terms of tissue distribution, major component of both the cotyledons and embryonic axes of mature seeds.

PA1b binds to basic 7S globulin (BG) and stimulates its phosphorylation activity. Involved in the signal transduction system to regulate the growth and differentiation as a hormone peptide. Toxic to various insects through binding to a high affinity binding site in the insect gut. The polypeptide is Albumin-1 B (Pisum sativum (Garden pea)).